A 235-amino-acid polypeptide reads, in one-letter code: tRNA (guanine-N(1)-)-methyltransferase (235 aa).

S-adenosyl-L-methionine is bound by residues Gly112 and 132 to 137 (IGDYVL).

This sequence belongs to the RNA methyltransferase TrmD family. In terms of assembly, homodimer.

It localises to the cytoplasm. The catalysed reaction is guanosine(37) in tRNA + S-adenosyl-L-methionine = N(1)-methylguanosine(37) in tRNA + S-adenosyl-L-homocysteine + H(+). Specifically methylates guanosine-37 in various tRNAs. The polypeptide is tRNA (guanine-N(1)-)-methyltransferase (Cytophaga hutchinsonii (strain ATCC 33406 / DSM 1761 / CIP 103989 / NBRC 15051 / NCIMB 9469 / D465)).